The sequence spans 700 residues: Lutropin-choriogonadotropic hormone receptor (700 aa).

Residues 1–26 (MGRRVPALRQLLVLAMLVLKQSQLHS) form the signal peptide. Residues 27–362 (PELSGSRCPE…AFNPCEDIMG (336 aa)) lie on the Extracellular side of the membrane. One copy of the LRR 1 repeat lies at 52-75 (RAGLARLSLTYLPVKVIPSQAFRG). N-linked (GlcNAc...) asparagine glycosylation is present at Asn103. LRR repeat units follow at residues 126-150 (LPRL…KISS), 176-200 (MNNE…AFNG), and 225-248 (ATGP…GLES). N-linked (GlcNAc...) asparagine glycosylation is found at Asn178 and Asn199. Asn295, Asn303, and Asn317 each carry an N-linked (GlcNAc...) asparagine glycan. Tyr335 bears the Sulfotyrosine mark. Residues 363 to 390 (YAFLRVLIWLINILAIFGNLTVLFVLLT) form a helical membrane-spanning segment. The Cytoplasmic portion of the chain corresponds to 391-399 (SRYKLTVPR). Residues 400 to 422 (FLMCNLSFADFCMGLYLLLIASV) traverse the membrane as a helical segment. The Extracellular portion of the chain corresponds to 423 to 443 (DSQTKGQYYNHAIDWQTGSGC). Cys443 and Cys518 are disulfide-bonded. The helical transmembrane segment at 444–466 (SAAGFFTVFASELSVYTLTVITL) threads the bilayer. Residues 467 to 486 (ERWHTITYAVQLDQKLRLRH) lie on the Cytoplasmic side of the membrane. A helical transmembrane segment spans residues 487–509 (AIPIMLGGWIFSTLMATLPLVGV). The Extracellular portion of the chain corresponds to 510–529 (SSYMKVSICLPMDVESTLSQ). The chain crosses the membrane as a helical span at residues 530-551 (VYILSILLLNAVAFVVICACYV). Topologically, residues 552 to 574 (RIYFAVQNPELTAPNKDTKIAKK) are cytoplasmic. The chain crosses the membrane as a helical span at residues 575-598 (MAILIFTDFTCMAPISFFAISAAF). Over 599–609 (KVPLITVTNSK) the chain is Extracellular. The helical transmembrane segment at 610 to 631 (VLLVLFYPVNSCANPFLYAVFT) threads the bilayer. Residues 632–700 (KAFQRDFFLL…QPTPPRVLIQ (69 aa)) lie on the Cytoplasmic side of the membrane. 2 S-palmitoyl cysteine lipidation sites follow: Cys647 and Cys648.

This sequence belongs to the G-protein coupled receptor 1 family. FSH/LSH/TSH subfamily. Sulfated.

It is found in the cell membrane. Functionally, receptor for lutropin-choriogonadotropic hormone. The activity of this receptor is mediated by G proteins which activate adenylate cyclase. This Mus musculus (Mouse) protein is Lutropin-choriogonadotropic hormone receptor (Lhcgr).